The following is a 147-amino-acid chain: Large ribosomal subunit protein bL9 (147 aa).

The tract at residues 40–60 is disordered; it reads TTGNLKQHEAHERKAAEEAKQ. Residues 45–59 show a composition bias toward basic and acidic residues; that stretch reads KQHEAHERKAAEEAK.

This sequence belongs to the bacterial ribosomal protein bL9 family.

In terms of biological role, binds to the 23S rRNA. The polypeptide is Large ribosomal subunit protein bL9 (Exiguobacterium sibiricum (strain DSM 17290 / CCUG 55495 / CIP 109462 / JCM 13490 / 255-15)).